Consider the following 461-residue polypeptide: Pancreatic triacylglycerol lipase (461 aa).

A signal peptide spans 1 to 12 (WTLSLLLGAVVG). 2 disulfides stabilise this stretch: C16/C22 and C103/C114. S165 acts as the Nucleophile in catalysis. D189 serves as the catalytic Charge relay system. Positions 200, 203, 205, and 208 each coordinate Ca(2+). Residues C250 and C274 are joined by a disulfide bond. The active-site Charge relay system is H276. Disulfide bonds link C298–C309, C312–C317, and C445–C461. The PLAT domain maps to 351 to 461 (WRYRVDVTLS…EDVLLTLTAC (111 aa)).

It belongs to the AB hydrolase superfamily. Lipase family. In terms of assembly, forms a 1:1 stoichiometric complex with (pro)colipase/CLPS.

Its subcellular location is the secreted. It carries out the reaction a triacylglycerol + H2O = a diacylglycerol + a fatty acid + H(+). The enzyme catalyses 1,2,3-tributanoylglycerol + H2O = dibutanoylglycerol + butanoate + H(+). It catalyses the reaction 1,2,3-tri-(9Z-octadecenoyl)-glycerol + H2O = di-(9Z)-octadecenoylglycerol + (9Z)-octadecenoate + H(+). The catalysed reaction is all-trans-retinyl hexadecanoate + H2O = all-trans-retinol + hexadecanoate + H(+). It carries out the reaction 1,2-di-(9Z-octadecenoyl)-glycerol + H2O = (9Z-octadecenoyl)-glycerol + (9Z)-octadecenoate + H(+). With respect to regulation, inhibited by bile salts, is reactivated by (pro)colipase/CLPS. Its function is as follows. Plays an important role in fat metabolism. It preferentially splits the esters of long-chain fatty acids at positions 1 and 3, producing mainly 2-monoacylglycerol and free fatty acids, and shows considerably higher activity against insoluble emulsified substrates than against soluble ones. This chain is Pancreatic triacylglycerol lipase (PNLIP), found in Equus caballus (Horse).